Consider the following 154-residue polypeptide: MPKKKSPGTLAENRKARHDYNIEDTIEAGIVLQGTEIKSIRRGSANLKDSYAQVNRGEMFLNNMHIAPYEEGNRFNHDPRRSRKLLLHKREIAKLGERTREVGYSIVPLKLYLKHGHCKVLLGVARGKKKYDKRQALKEKAVQRDVAREMKARY.

This sequence belongs to the SmpB family.

The protein resides in the cytoplasm. Its function is as follows. Required for rescue of stalled ribosomes mediated by trans-translation. Binds to transfer-messenger RNA (tmRNA), required for stable association of tmRNA with ribosomes. tmRNA and SmpB together mimic tRNA shape, replacing the anticodon stem-loop with SmpB. tmRNA is encoded by the ssrA gene; the 2 termini fold to resemble tRNA(Ala) and it encodes a 'tag peptide', a short internal open reading frame. During trans-translation Ala-aminoacylated tmRNA acts like a tRNA, entering the A-site of stalled ribosomes, displacing the stalled mRNA. The ribosome then switches to translate the ORF on the tmRNA; the nascent peptide is terminated with the 'tag peptide' encoded by the tmRNA and targeted for degradation. The ribosome is freed to recommence translation, which seems to be the essential function of trans-translation. The polypeptide is SsrA-binding protein (Staphylococcus saprophyticus subsp. saprophyticus (strain ATCC 15305 / DSM 20229 / NCIMB 8711 / NCTC 7292 / S-41)).